Consider the following 288-residue polypeptide: NAD(P)H-hydrate epimerase (288 aa).

Residues 1–47 constitute a mitochondrion transit peptide; that stretch reads MSRLRALLGLGLLVAGSRVPRIKSQTIACRSGPTWWGPQRLNSGGRW. Position 49 is a phosphoserine (Ser49). The YjeF N-terminal domain occupies 65–275; that stretch reads AQAVDQELFN…ALEKKYQLNL (211 aa). Residue 119 to 123 coordinates (6S)-NADPHX; that stretch reads NNGGD. Asn120 is a K(+) binding site. The residue at position 144 (Lys144) is an N6-succinyllysine. Asp185 contacts K(+). Residues 189–195 and Asp218 contribute to the (6S)-NADPHX site; that span reads GFSFKGD. K(+) is bound at residue Ser221.

It belongs to the NnrE/AIBP family. In terms of assembly, homodimer. Interacts with APOA1 and APOA2. It depends on K(+) as a cofactor. Post-translationally, undergoes physiological phosphorylation during sperm capacitation, downstream to PKA activation. As to expression, ubiquitously expressed, with highest levels in kidney, heart and liver. Present in cerebrospinal fluid and urine but not in serum from healthy patients. Present in serum of sepsis patients (at protein level).

It is found in the mitochondrion. The protein localises to the secreted. It catalyses the reaction (6R)-NADHX = (6S)-NADHX. The enzyme catalyses (6R)-NADPHX = (6S)-NADPHX. Its function is as follows. Catalyzes the epimerization of the S- and R-forms of NAD(P)HX, a damaged form of NAD(P)H that is a result of enzymatic or heat-dependent hydration. This is a prerequisite for the S-specific NAD(P)H-hydrate dehydratase to allow the repair of both epimers of NAD(P)HX. Accelerates cholesterol efflux from endothelial cells to high-density lipoprotein (HDL) and thereby regulates angiogenesis. This chain is NAD(P)H-hydrate epimerase, found in Homo sapiens (Human).